A 276-amino-acid polypeptide reads, in one-letter code: UPF0761 membrane protein APL_1950 (276 aa).

The next 7 membrane-spanning stretches (helical) occupy residues 33 to 53 (TLAIVPLVMVVFSIFTAFPIF), 90 to 110 (MGIVSTIGLVVVALMLIQSID), 125 to 145 (IFISFLLYAVILFIAPLLAGG), 147 to 167 (IAISSYIFSMAIFNENGLLSF), 171 to 191 (LLQYTPFLLIWLLFTTVYWLV), 203 to 223 (LGAIVAAIFFTLGKQAFVWYI), and 239 to 259 (LPIMLLWIHLSWQVVLFGGLI).

It belongs to the UPF0761 family.

The protein resides in the cell inner membrane. The protein is UPF0761 membrane protein APL_1950 of Actinobacillus pleuropneumoniae serotype 5b (strain L20).